A 406-amino-acid chain; its full sequence is MSALGAVIALLLWGQLFAVDSGNDVTDIADDGCPKPPEIAHGYVEHSVRYQCKNYYKLRTEGDGVYTLNDKKQWINKAVGDKLPECEADDGCPKPPEIAHGYVEHSVRYQCKNYYKLRTEGDGVYTLNNEKQWINKAVGDKLPECEAVCGKPKNPANPVQRILGGHLDAKGSFPWQAKMVSHHNLTTGATLINEQWLLTTAKNLFLNHSENATAKDIAPTLTLYVGKKQLVEIEKVVLHPNYSQVDIGLIKLKQKVSVNERVMPICLPSKDYAEVGRVGYVSGWGRNANFKFTDHLKYVMLPVADQDQCIRHYEGSTVPEKKTPKSPVGVQPILNEHTFCAGMSKYQEDTCYGDAGSAFAVHDLEEDTWYATGILSFDKSCAVAEYGVYVKVTSIQDWVQKTIAEN.

The signal sequence occupies residues 1–18 (MSALGAVIALLLWGQLFA). 2 consecutive Sushi domains span residues 31–88 (DGCP…ECEA) and 90–147 (DGCP…ECEA). 5 disulfides stabilise this stretch: Cys52/Cys86, Cys111/Cys145, Cys149/Cys266, Cys309/Cys340, and Cys351/Cys381. One can recognise a Peptidase S1 domain in the interval 162–404 (ILGGHLDAKG…IQDWVQKTIA (243 aa)). N-linked (GlcNAc...) (complex) asparagine glycosylation is present at Asn184. Asn207 and Asn211 each carry an N-linked (GlcNAc...) asparagine glycan. A glycan (N-linked (GlcNAc...) (complex) asparagine) is linked at Asn241. Positions 318 to 323 (VPEKKT) are interaction with CD163.

The protein belongs to the peptidase S1 family. As to quaternary structure, tetramer of two alpha and two beta chains; disulfide-linked. The hemoglobin/haptoglobin complex is composed of a haptoglobin dimer bound to two hemoglobin alpha-beta dimers. Interacts with CD163. Interacts with ERGIC3. As to expression, expressed by the liver and secreted in plasma.

It localises to the secreted. Functionally, as a result of hemolysis, hemoglobin is found to accumulate in the kidney and is secreted in the urine. Haptoglobin captures, and combines with free plasma hemoglobin to allow hepatic recycling of heme iron and to prevent kidney damage. Haptoglobin also acts as an antioxidant, has antibacterial activity, and plays a role in modulating many aspects of the acute phase response. Hemoglobin/haptoglobin complexes are rapidly cleared by the macrophage CD163 scavenger receptor expressed on the surface of liver Kupfer cells through an endocytic lysosomal degradation pathway. The uncleaved form of allele alpha-2 (2-2), known as zonulin, plays a role in intestinal permeability, allowing intercellular tight junction disassembly, and controlling the equilibrium between tolerance and immunity to non-self antigens. This is Haptoglobin (HP) from Homo sapiens (Human).